The primary structure comprises 348 residues: Protein RecA (348 aa).

67-74 is a binding site for ATP; that stretch reads GPESSGKT.

This sequence belongs to the RecA family.

The protein resides in the cytoplasm. Can catalyze the hydrolysis of ATP in the presence of single-stranded DNA, the ATP-dependent uptake of single-stranded DNA by duplex DNA, and the ATP-dependent hybridization of homologous single-stranded DNAs. It interacts with LexA causing its activation and leading to its autocatalytic cleavage. The sequence is that of Protein RecA from Clostridioides difficile (strain 630) (Peptoclostridium difficile).